The following is a 65-amino-acid chain: Alpha-toxin OD1 (65 aa).

Residues 3–65 enclose the LCN-type CS-alpha/beta domain; that stretch reads RDAYIADDKN…VPIRIPGKCR (63 aa). An Important for toxin selectivity for individual Nav channel subtype (Nav1.6/SCN8A and Nav1.7/SCN9A), but not for toxin potency motif is present at residues 9 to 11; that stretch reads DDK. 4 disulfides stabilise this stretch: cysteine 13-cysteine 64, cysteine 17-cysteine 37, cysteine 23-cysteine 47, and cysteine 27-cysteine 49. At arginine 65 the chain carries Arginine amide.

Belongs to the long (4 C-C) scorpion toxin superfamily. Sodium channel inhibitor family. Alpha subfamily. As to expression, expressed by the venom gland.

Its subcellular location is the secreted. Functionally, alpha toxins bind voltage-independently at site-3 of sodium channels and inhibit the inactivation of the activated channels. The toxin affect mammalian sodium channels Nav1.7/SCN9A (EC(50)=4.5 nM), Nav1.4/SCN4A (EC(50)=9.6 nM), Nav1.6/SCN8A (EC(50)=30 nM), Nav1.5/SCN5A (only at micromolar concentrations), and insect sodium channel para/tipE (EC(50)=80 nM). In vivo, intraplantar administration of this toxin elicits pain behaviors, including licking and flinching of the hind paw. The polypeptide is Alpha-toxin OD1 (Odontobuthus doriae (Yellow Iranian scorpion)).